The following is a 225-amino-acid chain: Germin-like protein 3-1 (225 aa).

The first 22 residues, 1–22, serve as a signal peptide directing secretion; it reads MRAAVAHRILLSLALFAVLCRC. The cysteines at positions 31 and 51 are disulfide-linked. In terms of domain architecture, Cupin type-1 spans 65 to 216; it reads SALSRATNPA…AFKITGQDVQ (152 aa). N-linked (GlcNAc...) asparagine glycosylation occurs at Asn-81. The Mn(2+) site is built by His-115, His-117, Glu-122, and His-161.

This sequence belongs to the germin family. In terms of assembly, oligomer (believed to be a pentamer but probably hexamer).

The protein localises to the secreted. It is found in the extracellular space. The protein resides in the apoplast. In terms of biological role, may play a role in plant defense. Probably has no oxalate oxidase activity even if the active site is conserved. This is Germin-like protein 3-1 from Oryza sativa subsp. japonica (Rice).